A 439-amino-acid polypeptide reads, in one-letter code: uncharacterized protein (439 aa).

A VWFA domain is found at 273 to 439 (PIIILLDHSG…EARKIYKSIS (167 aa)).

This is an uncharacterized protein from Methanocaldococcus jannaschii (strain ATCC 43067 / DSM 2661 / JAL-1 / JCM 10045 / NBRC 100440) (Methanococcus jannaschii).